The following is a 217-amino-acid chain: uncharacterized protein (217 aa).

2 helical membrane passes run 151 to 171 and 177 to 197; these read LIPFINFFLLYHQIILSHSLF and ISFHFLFFSFLSFPLLSFILF.

It is found in the mitochondrion membrane. This is an uncharacterized protein from Schizosaccharomyces pombe (strain 972 / ATCC 24843) (Fission yeast).